Consider the following 336-residue polypeptide: MSDKNSSQKNWTSWHHLLHKEILGNKTLIPDGANLLIAVSGGQDSMALLNLINDMKTQHNWFVNVWHGDHQWHKKSAKYALELKSYCNKKNISFFFDQANKNNISSEEKARDWRYKKLSERANQLLIENQKEIDIYLLTGHTNTDNAETFLLNLARGSNYAGLSNINKKRLLKHHIFLIRPLLIFSREDTKKFCQLQNIPIWEDPTNCDLTIKRNIVRKEIIPILETMYPGCSKRINSFAEKMSNYKNEQNDLSKLASLYCEDAIGVKRELLNSLCIEARCTILNTFLKKDCTKQLSSKNLTHLASSILVKDRGKIDLPDGFEIVWNKDYINLEKN.

ATP is bound at residue 40–45 (SGGQDS).

The protein belongs to the tRNA(Ile)-lysidine synthase family.

It localises to the cytoplasm. It carries out the reaction cytidine(34) in tRNA(Ile2) + L-lysine + ATP = lysidine(34) in tRNA(Ile2) + AMP + diphosphate + H(+). Functionally, ligates lysine onto the cytidine present at position 34 of the AUA codon-specific tRNA(Ile) that contains the anticodon CAU, in an ATP-dependent manner. Cytidine is converted to lysidine, thus changing the amino acid specificity of the tRNA from methionine to isoleucine. The protein is tRNA(Ile)-lysidine synthase of Prochlorococcus marinus subsp. pastoris (strain CCMP1986 / NIES-2087 / MED4).